The chain runs to 296 residues: Probable endonuclease 4 (296 aa).

9 residues coordinate Zn(2+): H68, H109, E144, D178, H181, H213, D226, H228, and E258.

This sequence belongs to the AP endonuclease 2 family. Zn(2+) serves as cofactor.

The enzyme catalyses Endonucleolytic cleavage to 5'-phosphooligonucleotide end-products.. Functionally, endonuclease IV plays a role in DNA repair. It cleaves phosphodiester bonds at apurinic or apyrimidinic (AP) sites, generating a 3'-hydroxyl group and a 5'-terminal sugar phosphate. The protein is Probable endonuclease 4 of Staphylococcus epidermidis (strain ATCC 35984 / DSM 28319 / BCRC 17069 / CCUG 31568 / BM 3577 / RP62A).